The chain runs to 751 residues: Lanosterol synthase erg7A (751 aa).

Positions 1 to 22 (MTGGPIASWRTAAQGHLTPDEN) are disordered. The stretch at 147 to 189 (ATEIKRYLFARQHPEDGGWGLHIEAHSSVFGTCMNYVALRLIG) is one PFTB 1 repeat. Asp-481 acts as the Proton donor in catalysis. PFTB repeat units lie at residues 508-553 (LKDS…MIGY), 585-625 (KDKA…ASVG), and 634-675 (ARRG…VQTA).

The protein belongs to the terpene cyclase/mutase family.

It localises to the lipid droplet. It is found in the endoplasmic reticulum membrane. The catalysed reaction is (S)-2,3-epoxysqualene = lanosterol. Its pathway is steroid metabolism; ergosterol biosynthesis. Its function is as follows. Lanosterol synthase; part of the third module of ergosterol biosynthesis pathway that includes the late steps of the pathway. ERG7A and ERG7B catalyze the cyclization of (S)-2,3 oxidosqualene to lanosterol, a reaction that forms the sterol core. The third module or late pathway involves the ergosterol synthesis itself through consecutive reactions that mainly occur in the endoplasmic reticulum (ER) membrane. Firstly, the squalene synthase erg9 catalyzes the condensation of 2 farnesyl pyrophosphate moieties to form squalene, which is the precursor of all steroids. Squalene synthase is crucial for balancing the incorporation of farnesyl diphosphate (FPP) into sterol and nonsterol isoprene synthesis. Secondly, squalene is converted into lanosterol by the consecutive action of the squalene epoxidase erg1 and the lanosterol synthase erg7. Then, the delta(24)-sterol C-methyltransferase erg6 methylates lanosterol at C-24 to produce eburicol. Eburicol is the substrate of the sterol 14-alpha demethylase encoded by cyp51A and cyp51B, to yield 4,4,24-trimethyl ergosta-8,14,24(28)-trienol. The C-14 reductase erg24 then reduces the C14=C15 double bond which leads to 4,4-dimethylfecosterol. A sequence of further demethylations at C-4, involving the C-4 demethylation complex containing the C-4 methylsterol oxidases erg25A or erg25B, the sterol-4-alpha-carboxylate 3-dehydrogenase erg26 and the 3-keto-steroid reductase erg27, leads to the production of fecosterol via 4-methylfecosterol. The C-8 sterol isomerase erg2 then catalyzes the reaction which results in unsaturation at C-7 in the B ring of sterols and thus converts fecosterol to episterol. The sterol-C5-desaturase erg3B then catalyzes the introduction of a C-5 double bond in the B ring to produce 5-dehydroepisterol. The 2 other sterol-C5-desaturases, erg3A and erg3C, seem to be less important in ergosterol biosynthesis. The C-22 sterol desaturase erg5 further converts 5-dehydroepisterol into ergosta-5,7,22,24(28)-tetraen-3beta-ol by forming the C-22(23) double bond in the sterol side chain. Finally, ergosta-5,7,22,24(28)-tetraen-3beta-ol is substrate of the C-24(28) sterol reductases erg4A and erg4B to produce ergosterol. Possible alternative sterol biosynthetic pathways might exist from fecosterol to ergosterol, depending on the activities of the erg3 isoforms. This Aspergillus fumigatus (strain ATCC MYA-4609 / CBS 101355 / FGSC A1100 / Af293) (Neosartorya fumigata) protein is Lanosterol synthase erg7A.